Consider the following 375-residue polypeptide: Succinyl-diaminopimelate desuccinylase (375 aa).

Residue His66 coordinates Zn(2+). Residue Asp68 is part of the active site. Asp99 contributes to the Zn(2+) binding site. Glu133 acts as the Proton acceptor in catalysis. Residues Glu134, Glu162, and His348 each coordinate Zn(2+).

It belongs to the peptidase M20A family. DapE subfamily. Homodimer. It depends on Zn(2+) as a cofactor. Co(2+) serves as cofactor.

It carries out the reaction N-succinyl-(2S,6S)-2,6-diaminopimelate + H2O = (2S,6S)-2,6-diaminopimelate + succinate. The protein operates within amino-acid biosynthesis; L-lysine biosynthesis via DAP pathway; LL-2,6-diaminopimelate from (S)-tetrahydrodipicolinate (succinylase route): step 3/3. Functionally, catalyzes the hydrolysis of N-succinyl-L,L-diaminopimelic acid (SDAP), forming succinate and LL-2,6-diaminopimelate (DAP), an intermediate involved in the bacterial biosynthesis of lysine and meso-diaminopimelic acid, an essential component of bacterial cell walls. In Aeromonas salmonicida (strain A449), this protein is Succinyl-diaminopimelate desuccinylase.